Consider the following 226-residue polypeptide: PKHD-type hydroxylase Daci_1172 (226 aa).

A Fe2OG dioxygenase domain is found at 78-178 (KVLPPRFNRY…RYASFFWTHS (101 aa)). 3 residues coordinate Fe cation: H96, D98, and H159. R169 is a binding site for 2-oxoglutarate.

Fe(2+) serves as cofactor. The cofactor is L-ascorbate.

In Delftia acidovorans (strain DSM 14801 / SPH-1), this protein is PKHD-type hydroxylase Daci_1172.